A 310-amino-acid polypeptide reads, in one-letter code: Tryptophan 2,3-dioxygenase (310 aa).

The disordered stretch occupies residues 1-36; it reads MQPPGEDAPAGCPFSGARAAHSAPAAPAAHEASHVP. Residues 15 to 36 show a composition bias toward low complexity; the sequence is SGARAAHSAPAAPAAHEASHVP. Substrate is bound by residues 79–83, tyrosine 141, and arginine 145; that span reads FIIQH. Residue histidine 268 coordinates heme. Threonine 282 is a substrate binding site.

The protein belongs to the tryptophan 2,3-dioxygenase family. As to quaternary structure, homotetramer. Requires heme as cofactor.

The catalysed reaction is L-tryptophan + O2 = N-formyl-L-kynurenine. The protein operates within amino-acid degradation; L-tryptophan degradation via kynurenine pathway; L-kynurenine from L-tryptophan: step 1/2. Its function is as follows. Heme-dependent dioxygenase that catalyzes the oxidative cleavage of the L-tryptophan (L-Trp) pyrrole ring and converts L-tryptophan to N-formyl-L-kynurenine. Catalyzes the oxidative cleavage of the indole moiety. The protein is Tryptophan 2,3-dioxygenase of Burkholderia lata (strain ATCC 17760 / DSM 23089 / LMG 22485 / NCIMB 9086 / R18194 / 383).